A 417-amino-acid chain; its full sequence is Gamma-glutamyl phosphate reductase (417 aa).

The protein belongs to the gamma-glutamyl phosphate reductase family.

The protein resides in the cytoplasm. The catalysed reaction is L-glutamate 5-semialdehyde + phosphate + NADP(+) = L-glutamyl 5-phosphate + NADPH + H(+). Its pathway is amino-acid biosynthesis; L-proline biosynthesis; L-glutamate 5-semialdehyde from L-glutamate: step 2/2. In terms of biological role, catalyzes the NADPH-dependent reduction of L-glutamate 5-phosphate into L-glutamate 5-semialdehyde and phosphate. The product spontaneously undergoes cyclization to form 1-pyrroline-5-carboxylate. The sequence is that of Gamma-glutamyl phosphate reductase from Shigella boydii serotype 18 (strain CDC 3083-94 / BS512).